The primary structure comprises 120 residues: Ribosome-binding factor A (120 aa).

It belongs to the RbfA family. As to quaternary structure, monomer. Binds 30S ribosomal subunits, but not 50S ribosomal subunits or 70S ribosomes.

Its subcellular location is the cytoplasm. One of several proteins that assist in the late maturation steps of the functional core of the 30S ribosomal subunit. Associates with free 30S ribosomal subunits (but not with 30S subunits that are part of 70S ribosomes or polysomes). Required for efficient processing of 16S rRNA. May interact with the 5'-terminal helix region of 16S rRNA. The protein is Ribosome-binding factor A of Rickettsia conorii (strain ATCC VR-613 / Malish 7).